The chain runs to 321 residues: Arabinan endo-1,5-alpha-L-arabinosidase A (321 aa).

The signal sequence occupies residues 1–19; it reads MYSLLTALSVPLLAGLAHG. Aspartate 34 (proton acceptor) is an active-site residue. N-linked (GlcNAc...) asparagine glycosylation is present at asparagine 192. Residue glutamate 200 is the Proton donor of the active site.

It belongs to the glycosyl hydrolase 43 family.

The protein resides in the secreted. It carries out the reaction Endohydrolysis of (1-&gt;5)-alpha-arabinofuranosidic linkages in (1-&gt;5)-arabinans.. Its pathway is glycan metabolism; L-arabinan degradation. Its function is as follows. Endo-1,5-alpha-L-arabinanase involved in degradation of pectin. Its preferred substrate is linear 1,5-alpha-L-arabinan. The polypeptide is Arabinan endo-1,5-alpha-L-arabinosidase A (abnA) (Aspergillus aculeatus).